Reading from the N-terminus, the 881-residue chain is Valine--tRNA ligase (881 aa).

The 'HIGH' region signature appears at 49–59; that stretch reads PNVTGKLHLGH. A 'KMSKS' region motif is present at residues 526 to 530; sequence KMSKS. Lys529 contacts ATP. Residues 810-881 are a coiled coil; the sequence is LADLINLDEE…VRQRLADLEK (72 aa).

It belongs to the class-I aminoacyl-tRNA synthetase family. ValS type 1 subfamily. Monomer.

Its subcellular location is the cytoplasm. It carries out the reaction tRNA(Val) + L-valine + ATP = L-valyl-tRNA(Val) + AMP + diphosphate. Catalyzes the attachment of valine to tRNA(Val). As ValRS can inadvertently accommodate and process structurally similar amino acids such as threonine, to avoid such errors, it has a 'posttransfer' editing activity that hydrolyzes mischarged Thr-tRNA(Val) in a tRNA-dependent manner. This chain is Valine--tRNA ligase, found in Bacillus cereus (strain ATCC 14579 / DSM 31 / CCUG 7414 / JCM 2152 / NBRC 15305 / NCIMB 9373 / NCTC 2599 / NRRL B-3711).